Reading from the N-terminus, the 239-residue chain is Ribose-5-phosphate isomerase A (239 aa).

Residues 40–43, 96–99, and 110–113 contribute to the substrate site; these read SGST, DGAD, and KGGG. Residue E119 is the Proton acceptor of the active site. Residue K137 participates in substrate binding.

Belongs to the ribose 5-phosphate isomerase family. In terms of assembly, homodimer.

The catalysed reaction is aldehydo-D-ribose 5-phosphate = D-ribulose 5-phosphate. The protein operates within carbohydrate degradation; pentose phosphate pathway; D-ribose 5-phosphate from D-ribulose 5-phosphate (non-oxidative stage): step 1/1. Its function is as follows. Catalyzes the reversible conversion of ribose-5-phosphate to ribulose 5-phosphate. The sequence is that of Ribose-5-phosphate isomerase A from Methanococcus maripaludis (strain C7 / ATCC BAA-1331).